Here is a 371-residue protein sequence, read N- to C-terminus: Cytochrome b (371 aa).

4 helical membrane-spanning segments follow: residues 25–45 (FGSM…FLAI), 69–90 (WTMQ…YTHI), 105–125 (WLSG…GYVL), and 170–190 (FFAL…VHII). Heme b is bound by residues H75 and H89. H174 and H188 together coordinate heme b. H193 is a binding site for a ubiquinone. The next 4 membrane-spanning stretches (helical) occupy residues 218–238 (YKDM…MSFS), 280–300 (LGGT…PFTH), 312–332 (FTQL…WTAT), and 339–358 (FILI…IINP).

This sequence belongs to the cytochrome b family. As to quaternary structure, the cytochrome bc1 complex contains 3 respiratory subunits (MT-CYB, CYC1 and UQCRFS1), 2 core proteins (UQCRC1 and UQCRC2) and probably 6 low-molecular weight proteins. The cofactor is heme b.

The protein resides in the mitochondrion inner membrane. Component of the ubiquinol-cytochrome c reductase complex (complex III or cytochrome b-c1 complex) that is part of the mitochondrial respiratory chain. The b-c1 complex mediates electron transfer from ubiquinol to cytochrome c. Contributes to the generation of a proton gradient across the mitochondrial membrane that is then used for ATP synthesis. This Elapognathus coronatus (Western crowned snake) protein is Cytochrome b (MT-CYB).